The sequence spans 365 residues: Probable G-protein coupled receptor 142 (365 aa).

At 1–66 (MHLNSNPNSY…WPESPERSPC (66 aa)) the chain is on the extracellular side. An N-linked (GlcNAc...) asparagine glycan is attached at Asn44. A helical membrane pass occupies residues 67-87 (VAGIIPVIYYSVLLSLGLPVA). Topologically, residues 88–102 (LARLAARTRKPSYHY) are cytoplasmic. The helical transmembrane segment at 103 to 123 (LLALTASDIVTQVIIVFVGFL) threads the bilayer. Topologically, residues 124-140 (LQGAVLARQVPQAVVRT) are extracellular. The helical transmembrane segment at 141-161 (ANILEFAANHASVWIAVLFTV) threads the bilayer. The Cytoplasmic segment spans residues 162-185 (DRYNALCRPLRHRATSSPGRTHRA). The chain crosses the membrane as a helical span at residues 186-206 (IAAVIGVTLLTGIPFYWWLDV). Residues 207-224 (WRDADPPSTMDKLLKWAH) are Extracellular-facing. Residues 225–245 (CLIVYFIPCNVFLVTNSAIIL) traverse the membrane as a helical segment. Over 246–264 (RLRKRGQRGLRPLVSKSTA) the chain is Cytoplasmic. The chain crosses the membrane as a helical span at residues 265-285 (ILLGVTSLFALLWAPRIIVML). The Extracellular portion of the chain corresponds to 286–304 (YHLYVAPVHRDWRVHLALD). Residues 305 to 325 (IANMLAMLNTEVNFGLYCFIS) form a helical membrane-spanning segment. Topologically, residues 326-365 (KTFRATVRQVICDVHMACALKSQPKQTVVELMLKSVGTEL) are cytoplasmic.

The protein belongs to the G-protein coupled receptor 1 family.

The protein resides in the cell membrane. In terms of biological role, orphan receptor. The sequence is that of Probable G-protein coupled receptor 142 (Gpr142) from Mus musculus (Mouse).